Here is a 180-residue protein sequence, read N- to C-terminus: Chromatin structure-remodeling complex protein RSC14 (180 aa).

As to quaternary structure, interacts with STH1, RSC3 and ARP9. Component of the two forms of the RSC complex composed of at least either RSC1 or RSC2, and ARP7, ARP9, LDB7, NPL6, RSC3, RSC30, RSC4, RSC58, RSC6, RSC8, RSC9, SFH1, STH1, HTL1 and probably RTT102. The complexes interact with histone and histone variant components of centromeric chromatin. Component of a fungal-specific module (HTL1-LDB7-NPL6-RSC3-RSC30) within the RSC complex.

The protein localises to the nucleus. Its function is as follows. Component of the chromatin structure-remodeling complex (RSC), which is involved in transcription regulation and nucleosome positioning. RSC is responsible for the transfer of a histone octamer from a nucleosome core particle to naked DNA. The reaction requires ATP and involves an activated RSC-nucleosome intermediate. Remodeling reaction also involves DNA translocation, DNA twist and conformational change. As a reconfigurer of centromeric and flanking nucleosomes, RSC complex is required both for proper kinetochore function in chromosome segregation and, via a PKC1-dependent signaling pathway, for organization of the cellular cytoskeleton. Together with HTL1, NPL6, RSC3, RSC30 components, defines a fungal-specific module within the RSC complex that plays a role in many cellular functions including the maintenance of cell wall integrity. May be involved in the transfer of mannosylphosphate (MP) groups into N-linked oligosaccharides. This chain is Chromatin structure-remodeling complex protein RSC14 (LDB7), found in Saccharomyces cerevisiae (strain ATCC 204508 / S288c) (Baker's yeast).